A 146-amino-acid chain; its full sequence is MDDQRPKNIFLLCRDSGISFDDLRLHCIFCAKVLTTAELSAFALRELNVVWRTGAPYGACARCLLLQGIVRRLKHWDYSLYVEGVEEETKQSIDTQQVRCYMCHKPLVKEEKDRHRNERRRLHCIAGYWRGSCQYCWLRCTVRIPQ.

Zinc fingers lie at residues 27-63 and 100-136; these read CIFC…CARC and CYMC…CQYC.

The protein belongs to the papillomaviridae E6 protein family. Forms homodimers. Interacts with ubiquitin-protein ligase UBE3A/E6-AP; this interaction stimulates UBE3A ubiquitin activity. Interacts with host TP53 and EP300; this interaction inhibits TP53 activity.

The protein localises to the host cytoplasm. Its subcellular location is the host nucleus. Functionally, plays a major role in the induction and maintenance of cellular transformation. E6 associates with host UBE3A/E6-AP ubiquitin-protein ligase and modulates its activity. Sequesters tumor suppressor TP53 in the host cytoplasm and modulates its activity by interacting with host EP300 that results in the reduction of TP53 acetylation and activation. In turn, apoptosis induced by DNA damage is inhibited. E6 also protects host keratinocytes from apoptosis by mediating the degradation of host BAK1. May also inhibit host immune response. The chain is Protein E6 from Homo sapiens (Human).